The sequence spans 204 residues: MGISRDSRHKRRLTGGKHPYTCKKRKYELGRQPAMTKIGGKLVRTVRVRGGNLKSRALRLESGNFAWGSEAFTSKSRILNVVYNASNNELVRTNTFVKGCIIQIDATPFRQYYHNHYGIDIGKKKAGDEESKFSKRHAGKQEKRCQTRLPLDEGIKELFQSGRLYASIASRPGQSGRADGYLLEGKELEFYAKAMQKKKKAGKS.

It belongs to the eukaryotic ribosomal protein eS8 family.

The polypeptide is Small ribosomal subunit protein eS8 (RPS8) (Griffithsia japonica (Red alga)).